The following is a 64-amino-acid chain: Alpha-conotoxin Lt14.1 (64 aa).

Residues 1-20 form the signal peptide; the sequence is MKLSVMFIVFLMLTMPMTCA. The propeptide occupies 21–50; that stretch reads GISRSATNGGEADVRAHDKAANLMALLQER. Cystine bridges form between cysteine 52–cysteine 60 and cysteine 56–cysteine 63. The residue at position 63 (cysteine 63) is a Cysteine amide.

It belongs to the conotoxin L superfamily. In terms of processing, may contain a 4-hydroxyproline. Expressed by the venom duct.

Its subcellular location is the secreted. Its function is as follows. Alpha-conotoxins act on postsynaptic membranes, they bind to the nicotinic acetylcholine receptors (nAChR) and thus inhibit them. This synthetic peptide displays analgesic activity in a hot plate assay. Analgesia is also observed against second phase pain in formalin-induced inflammatory pain model, and in a rat model of mechanically-induced pain. Effects downstream of nAChR are inhibition of calcium influx, inhibition of ERK1/2 phosphorylation and inhibition of c-fos/NOS expression. Genes associated with drug dependence are not up-regulated by this toxin. Treatment with this toxin reversed morphine withdrawal symptoms in mice. This Conus litteratus (Lettered cone) protein is Alpha-conotoxin Lt14.1.